The following is a 121-amino-acid chain: Small ribosomal subunit protein uS13 (121 aa).

Residues 89–121 (MRHRRGLPVRGQHTKNNARTRKGKKVSIAGRKK) form a disordered region.

The protein belongs to the universal ribosomal protein uS13 family. Part of the 30S ribosomal subunit. Forms a loose heterodimer with protein S19. Forms two bridges to the 50S subunit in the 70S ribosome.

Its function is as follows. Located at the top of the head of the 30S subunit, it contacts several helices of the 16S rRNA. In the 70S ribosome it contacts the 23S rRNA (bridge B1a) and protein L5 of the 50S subunit (bridge B1b), connecting the 2 subunits; these bridges are implicated in subunit movement. Contacts the tRNAs in the A and P-sites. The sequence is that of Small ribosomal subunit protein uS13 from Pediococcus pentosaceus (strain ATCC 25745 / CCUG 21536 / LMG 10740 / 183-1w).